The primary structure comprises 68 residues: Large ribosomal subunit protein bL35 (68 aa).

This sequence belongs to the bacterial ribosomal protein bL35 family.

This is Large ribosomal subunit protein bL35 from Wolbachia pipientis subsp. Culex pipiens (strain wPip).